Reading from the N-terminus, the 76-residue chain is COMM domain-containing protein 6 (76 aa).

A COMM domain is found at 9-76; the sequence is KLVDFQWKLG…KDMSNMIETL (68 aa).

It belongs to the COMM domain-containing protein 6 family. As to quaternary structure, component of the commander complex consisting of the CCC subcomplex and the retriever subcomplex. Component of the CCC subcomplex.

Functionally, scaffold protein in the commander complex that is essential for endosomal recycling of transmembrane cargos; the commander complex is composed of the CCC subcomplex and the retriever subcomplex. The sequence is that of COMM domain-containing protein 6 (commd6) from Dictyostelium discoideum (Social amoeba).